The sequence spans 158 residues: Phosphopantetheine adenylyltransferase (158 aa).

S9 is a binding site for substrate. ATP-binding positions include 9-10 (SF) and H17. The substrate site is built by K41, T73, and R87. ATP is bound by residues 88 to 90 (GLR), E98, and 122 to 128 (NQNISSS).

Belongs to the bacterial CoaD family. Homohexamer. It depends on Mg(2+) as a cofactor.

The protein resides in the cytoplasm. The enzyme catalyses (R)-4'-phosphopantetheine + ATP + H(+) = 3'-dephospho-CoA + diphosphate. Its pathway is cofactor biosynthesis; coenzyme A biosynthesis; CoA from (R)-pantothenate: step 4/5. In terms of biological role, reversibly transfers an adenylyl group from ATP to 4'-phosphopantetheine, yielding dephospho-CoA (dPCoA) and pyrophosphate. This is Phosphopantetheine adenylyltransferase from Leuconostoc citreum (strain KM20).